The sequence spans 178 residues: Translation initiation factor IF-3 (178 aa).

It belongs to the IF-3 family. Monomer.

Its subcellular location is the cytoplasm. In terms of biological role, IF-3 binds to the 30S ribosomal subunit and shifts the equilibrium between 70S ribosomes and their 50S and 30S subunits in favor of the free subunits, thus enhancing the availability of 30S subunits on which protein synthesis initiation begins. The polypeptide is Translation initiation factor IF-3 (Picosynechococcus sp. (strain ATCC 27264 / PCC 7002 / PR-6) (Agmenellum quadruplicatum)).